The following is a 537-amino-acid chain: O-phosphoserine--tRNA(Cys) ligase (537 aa).

Substrate-binding positions include 186 to 188, 231 to 233, 273 to 274, and Asn-317; these read HMT, SAS, and YY.

This sequence belongs to the class-II aminoacyl-tRNA synthetase family. O-phosphoseryl-tRNA(Cys) synthetase subfamily. As to quaternary structure, homotetramer. Interacts with SepCysS.

It carries out the reaction tRNA(Cys) + O-phospho-L-serine + ATP = O-phospho-L-seryl-tRNA(Cys) + AMP + diphosphate. In terms of biological role, catalyzes the attachment of O-phosphoserine (Sep) to tRNA(Cys). In Methanococcus maripaludis (strain DSM 14266 / JCM 13030 / NBRC 101832 / S2 / LL), this protein is O-phosphoserine--tRNA(Cys) ligase.